Reading from the N-terminus, the 81-residue chain is Cytotoxin I-like T-15 (81 aa).

Residues 1 to 21 (MKTLLLTLVVVTIVCLDLGYT) form the signal peptide. 4 disulfide bridges follow: Cys24–Cys42, Cys35–Cys59, Cys63–Cys74, and Cys75–Cys80.

This sequence belongs to the three-finger toxin family. Short-chain subfamily. Type IA cytotoxin sub-subfamily. In terms of assembly, monomer in solution; Homodimer and oligomer in the presence of negatively charged lipids forming a pore with a size ranging between 20 and 30 Angstroms. In terms of tissue distribution, expressed by the venom gland.

The protein resides in the secreted. It is found in the target cell membrane. Shows cytolytic activity on many different cells by forming pore in lipid membranes. In vivo, increases heart rate or kills the animal by cardiac arrest. In addition, it binds to heparin with high affinity, interacts with Kv channel-interacting protein 1 (KCNIP1) in a calcium-independent manner, and binds to integrin alpha-V/beta-3 (ITGAV/ITGB3) with moderate affinity. The chain is Cytotoxin I-like T-15 from Naja atra (Chinese cobra).